A 188-amino-acid polypeptide reads, in one-letter code: Elongation factor P-like protein (188 aa).

The protein belongs to the elongation factor P family.

In Aliivibrio fischeri (strain ATCC 700601 / ES114) (Vibrio fischeri), this protein is Elongation factor P-like protein.